Here is a 435-residue protein sequence, read N- to C-terminus: Tubulin-like protein TubZ (435 aa).

Residues 25-26, 124-126, Asn-185, and Asn-209 contribute to the GTP site; these read MG and GTG. The segment at 403-435 is disordered; that stretch reads QEEKPKKKKLNFGAEPEAEVADDSQPTKKKLSF.

Belongs to the FtsZ family. TubZ subfamily. As to quaternary structure, polymerizes to form two-stranded filaments and bundles at higher concentration in the presence of GTP. Binds to the TubR-tubC protein DNA complex.

Its subcellular location is the cytoplasm. It carries out the reaction GTP + H2O = GDP + phosphate + H(+). Its activity is regulated as follows. GTPase inhibited by GTP-gamma-S, which also stabilizes filaments. Its function is as follows. A tubulin-like, filament forming GTPase; the motor component of the type III plasmid partition system which ensures correct segregation of the pXO1 plasmid. Essential for plasmid replication. The filaments seed from a DNA centromere-like site (tubC)-TubR complex which extends to surround the TubZ filaments. Highly dynamic filaments grow at the plus end and depolymerize at the minus end, a process called treadmilling. TubR-tubC complexes track the depolymerizing minus end of the filament, probably pulling plasmid within the cell. Has a high GTPase activity; in the presence of GTP assembles into dynamic filaments which bind almost exclusively GDP. Filament formation is cooperative, requiring a critical concentration. Formation occurs very quickly and is followed by disassembly as GTP is consumed. Small amounts of GTP-gamma-S stabilize filaments. Has high GTP and dGTPase activity, 6-fold lower ATPase activity. Forms filaments in the presence of ATP that also disassemble. Weakly binds DNA in a GTP-dependent, non-sequence-specific manner; GTP hydrolysis is not required for DNA-binding. The sequence is that of Tubulin-like protein TubZ from Bacillus anthracis.